A 175-amino-acid chain; its full sequence is FOXL2 neighbor protein (175 aa).

Disordered regions lie at residues 1–39 and 70–100; these read MTRTPVGSARTRPKPRKLGPQRGKALQASSRLSESPALV and AQKTGPGILQQRQKPPAPRASGGPALLGKRR.

The chain is FOXL2 neighbor protein (FOXL2NB) from Homo sapiens (Human).